The chain runs to 453 residues: Tryptophan biosynthesis protein TrpCF (453 aa).

Positions 1 to 257 are indole-3-glycerol phosphate synthase; it reads MMQTVLAKIV…AAVRRVLLGE (257 aa). Residues 258-453 form an N-(5'-phosphoribosyl)anthranilate isomerase region; the sequence is NKVCGLTRGQ…ASVFQTLRAY (196 aa).

This sequence in the N-terminal section; belongs to the TrpC family. In the C-terminal section; belongs to the TrpF family. Monomer.

It carries out the reaction N-(5-phospho-beta-D-ribosyl)anthranilate = 1-(2-carboxyphenylamino)-1-deoxy-D-ribulose 5-phosphate. The catalysed reaction is 1-(2-carboxyphenylamino)-1-deoxy-D-ribulose 5-phosphate + H(+) = (1S,2R)-1-C-(indol-3-yl)glycerol 3-phosphate + CO2 + H2O. It functions in the pathway amino-acid biosynthesis; L-tryptophan biosynthesis; L-tryptophan from chorismate: step 3/5. It participates in amino-acid biosynthesis; L-tryptophan biosynthesis; L-tryptophan from chorismate: step 4/5. Its function is as follows. Bifunctional enzyme that catalyzes two sequential steps of tryptophan biosynthetic pathway. The first reaction is catalyzed by the isomerase, coded by the TrpF domain; the second reaction is catalyzed by the synthase, coded by the TrpC domain. In Escherichia coli (strain K12), this protein is Tryptophan biosynthesis protein TrpCF (trpC).